The following is a 345-amino-acid chain: Aspartate--ammonia ligase (345 aa).

The protein belongs to the class-II aminoacyl-tRNA synthetase family. AsnA subfamily.

It is found in the cytoplasm. The catalysed reaction is L-aspartate + NH4(+) + ATP = L-asparagine + AMP + diphosphate + H(+). The protein operates within amino-acid biosynthesis; L-asparagine biosynthesis; L-asparagine from L-aspartate (ammonia route): step 1/1. This Bacteroides thetaiotaomicron (strain ATCC 29148 / DSM 2079 / JCM 5827 / CCUG 10774 / NCTC 10582 / VPI-5482 / E50) protein is Aspartate--ammonia ligase.